A 61-amino-acid chain; its full sequence is Small ribosomal subunit protein uS14B (61 aa).

Zn(2+)-binding residues include C24, C27, C40, and C43.

Belongs to the universal ribosomal protein uS14 family. Zinc-binding uS14 subfamily. As to quaternary structure, part of the 30S ribosomal subunit. Contacts proteins S3 and S10. Zn(2+) serves as cofactor.

Its function is as follows. Binds 16S rRNA, required for the assembly of 30S particles and may also be responsible for determining the conformation of the 16S rRNA at the A site. In Streptococcus agalactiae serotype Ia (strain ATCC 27591 / A909 / CDC SS700), this protein is Small ribosomal subunit protein uS14B.